Reading from the N-terminus, the 170-residue chain is Protein-export protein SecB (170 aa).

Belongs to the SecB family. As to quaternary structure, homotetramer, a dimer of dimers. One homotetramer interacts with 1 SecA dimer.

Its subcellular location is the cytoplasm. Functionally, one of the proteins required for the normal export of preproteins out of the cell cytoplasm. It is a molecular chaperone that binds to a subset of precursor proteins, maintaining them in a translocation-competent state. It also specifically binds to its receptor SecA. This Xanthomonas campestris pv. campestris (strain 8004) protein is Protein-export protein SecB.